Consider the following 428-residue polypeptide: UDP-N-acetylglucosamine 1-carboxyvinyltransferase 2 (428 aa).

Residue 22-23 (KN) coordinates phosphoenolpyruvate. Arg-92 lines the UDP-N-acetyl-alpha-D-glucosamine pocket. Cys-116 acts as the Proton donor in catalysis. Cys-116 is modified (2-(S-cysteinyl)pyruvic acid O-phosphothioketal). UDP-N-acetyl-alpha-D-glucosamine-binding positions include 121–125 (RPIDQ), Asp-304, and Ile-326.

Belongs to the EPSP synthase family. MurA subfamily.

The protein localises to the cytoplasm. The enzyme catalyses phosphoenolpyruvate + UDP-N-acetyl-alpha-D-glucosamine = UDP-N-acetyl-3-O-(1-carboxyvinyl)-alpha-D-glucosamine + phosphate. The protein operates within cell wall biogenesis; peptidoglycan biosynthesis. Functionally, cell wall formation. Adds enolpyruvyl to UDP-N-acetylglucosamine. This is UDP-N-acetylglucosamine 1-carboxyvinyltransferase 2 from Shouchella clausii (strain KSM-K16) (Alkalihalobacillus clausii).